Here is a 128-residue protein sequence, read N- to C-terminus: Small ribosomal subunit protein uS9 (128 aa).

The tract at residues 107 to 128 (RAVERKKPGRPKARKRFQFSKR) is disordered. Residues 113 to 128 (KPGRPKARKRFQFSKR) are compositionally biased toward basic residues.

Belongs to the universal ribosomal protein uS9 family.

This chain is Small ribosomal subunit protein uS9, found in Parabacteroides distasonis (strain ATCC 8503 / DSM 20701 / CIP 104284 / JCM 5825 / NCTC 11152).